The following is a 123-amino-acid chain: MPTINQLVRKGRQKPVYVNKVPALEACPQKRGVCTRVYTTTPRKPNSALRKVCKVRLTNGFEVISYIGGEGHNLQEHSVVLIRGGRVKDLPGVRYHTVRGSLDTAGVKDRKQARSKYGAKRPK.

3-methylthioaspartic acid is present on aspartate 89. The interval 104 to 123 is disordered; it reads TAGVKDRKQARSKYGAKRPK. The segment covering 113–123 has biased composition (basic residues); it reads ARSKYGAKRPK.

It belongs to the universal ribosomal protein uS12 family. In terms of assembly, part of the 30S ribosomal subunit. Contacts proteins S8 and S17. May interact with IF1 in the 30S initiation complex.

Functionally, with S4 and S5 plays an important role in translational accuracy. In terms of biological role, interacts with and stabilizes bases of the 16S rRNA that are involved in tRNA selection in the A site and with the mRNA backbone. Located at the interface of the 30S and 50S subunits, it traverses the body of the 30S subunit contacting proteins on the other side and probably holding the rRNA structure together. The combined cluster of proteins S8, S12 and S17 appears to hold together the shoulder and platform of the 30S subunit. The polypeptide is Small ribosomal subunit protein uS12 (Neisseria gonorrhoeae (strain ATCC 700825 / FA 1090)).